A 487-amino-acid chain; its full sequence is NADH-quinone oxidoreductase subunit N (487 aa).

A run of 14 helical transmembrane segments spans residues 8-28 (LLALLPLLLTTGAMVALMLAI), 37-57 (AFVVTIAGLNLALFSLPIVMA), 71-91 (GYAVFYMGLVLIGALATCTFG), 104-124 (EFYLLLLIATAGGLVLAGSRH), 125-145 (LASLFIGIEMLTLPMFGLVGY), 159-179 (YMVLSAAATAFLLFGMALLYA), 203-223 (LMGGLGLMLVGFAFKLSLAPF), 235-255 (PAPVATFLATVSKIAVFCVLL), 269-289 (IHWLLAAMAVISIVIGNLLAL), 303-323 (ISHFGYLLAVIVASRLGQMPV), 327-347 (GVYLLMYLFTSLGAFGVISMM), 374-394 (AVLTVMMLSLAGIPMTLGFIG), 408-427 (WWLSGAIVLGSALGLYYYLR), and 449-469 (AITSGGLVVLLSAALVVALGL).

The protein belongs to the complex I subunit 2 family. In terms of assembly, NDH-1 is composed of 14 different subunits. Subunits NuoA, H, J, K, L, M, N constitute the membrane sector of the complex.

It is found in the cell inner membrane. The catalysed reaction is a quinone + NADH + 5 H(+)(in) = a quinol + NAD(+) + 4 H(+)(out). Its function is as follows. NDH-1 shuttles electrons from NADH, via FMN and iron-sulfur (Fe-S) centers, to quinones in the respiratory chain. The immediate electron acceptor for the enzyme in this species is believed to be ubiquinone. Couples the redox reaction to proton translocation (for every two electrons transferred, four hydrogen ions are translocated across the cytoplasmic membrane), and thus conserves the redox energy in a proton gradient. The chain is NADH-quinone oxidoreductase subunit N from Aeromonas hydrophila subsp. hydrophila (strain ATCC 7966 / DSM 30187 / BCRC 13018 / CCUG 14551 / JCM 1027 / KCTC 2358 / NCIMB 9240 / NCTC 8049).